Consider the following 166-residue polypeptide: Small ribosomal subunit protein uS5 (166 aa).

An S5 DRBM domain is found at 11-74 (FLEKLIAVNR…EKARRNMVDV (64 aa)).

The protein belongs to the universal ribosomal protein uS5 family. As to quaternary structure, part of the 30S ribosomal subunit. Contacts proteins S4 and S8.

In terms of biological role, with S4 and S12 plays an important role in translational accuracy. Located at the back of the 30S subunit body where it stabilizes the conformation of the head with respect to the body. This chain is Small ribosomal subunit protein uS5, found in Alteromonas mediterranea (strain DSM 17117 / CIP 110805 / LMG 28347 / Deep ecotype).